The primary structure comprises 574 residues: uncharacterized protein (574 aa).

This is an uncharacterized protein from Homo sapiens (Human).